A 283-amino-acid polypeptide reads, in one-letter code: Protein/nucleic acid deglycase HchA (283 aa).

His-86, Glu-91, and His-123 together coordinate Zn(2+). Cys-185 serves as the catalytic Nucleophile.

This sequence belongs to the peptidase C56 family. HchA subfamily. In terms of assembly, homodimer.

It is found in the cytoplasm. It carries out the reaction N(omega)-(1-hydroxy-2-oxopropyl)-L-arginyl-[protein] + H2O = lactate + L-arginyl-[protein] + H(+). The catalysed reaction is N(6)-(1-hydroxy-2-oxopropyl)-L-lysyl-[protein] + H2O = lactate + L-lysyl-[protein] + H(+). It catalyses the reaction S-(1-hydroxy-2-oxopropyl)-L-cysteinyl-[protein] + H2O = lactate + L-cysteinyl-[protein] + H(+). The enzyme catalyses N(omega)-(1-hydroxy-2-oxoethyl)-L-arginyl-[protein] + H2O = L-arginyl-[protein] + glycolate + H(+). It carries out the reaction N(6)-(1-hydroxy-2-oxoethyl)-L-lysyl-[protein] + H2O = glycolate + L-lysyl-[protein] + H(+). The catalysed reaction is S-(1-hydroxy-2-oxoethyl)-L-cysteinyl-[protein] + H2O = glycolate + L-cysteinyl-[protein] + H(+). It catalyses the reaction N(2)-(1-hydroxy-2-oxopropyl)-dGTP + H2O = lactate + dGTP + H(+). The enzyme catalyses N(2)-(1-hydroxy-2-oxopropyl)-GTP + H2O = lactate + GTP + H(+). It carries out the reaction N(2)-(1-hydroxy-2-oxopropyl)-GDP + H2O = lactate + GDP + H(+). The catalysed reaction is N(2)-(1-hydroxy-2-oxopropyl)-GMP + H2O = lactate + GMP + H(+). It catalyses the reaction N(2)-(1-hydroxy-2-oxoethyl)-dGTP + H2O = dGTP + glycolate + H(+). The enzyme catalyses N(2)-(1-hydroxy-2-oxoethyl)-GTP + H2O = glycolate + GTP + H(+). It carries out the reaction N(2)-(1-hydroxy-2-oxoethyl)-GDP + H2O = glycolate + GDP + H(+). The catalysed reaction is N(2)-(1-hydroxy-2-oxoethyl)-GMP + H2O = glycolate + GMP + H(+). It catalyses the reaction an N(2)-(1-hydroxy-2-oxopropyl)-guanosine in RNA + H2O = a guanosine in RNA + lactate + H(+). The enzyme catalyses an N(2)-(1-hydroxy-2-oxopropyl)-2'-deoxyguanosine in DNA + H2O = a 2'-deoxyguanosine in DNA + lactate + H(+). It carries out the reaction an N(2)-(1-hydroxy-2-oxoethyl)-guanosine in RNA + H2O = a guanosine in RNA + glycolate + H(+). The catalysed reaction is an N(2)-(1-hydroxy-2-oxoethyl)-2'-deoxyguanosine in DNA + H2O = a 2'-deoxyguanosine in DNA + glycolate + H(+). Its function is as follows. Protein and nucleotide deglycase that catalyzes the deglycation of the Maillard adducts formed between amino groups of proteins or nucleotides and reactive carbonyl groups of glyoxals. Thus, functions as a protein deglycase that repairs methylglyoxal- and glyoxal-glycated proteins, and releases repaired proteins and lactate or glycolate, respectively. Deglycates cysteine, arginine and lysine residues in proteins, and thus reactivates these proteins by reversing glycation by glyoxals. Acts on early glycation intermediates (hemithioacetals and aminocarbinols), preventing the formation of Schiff bases and advanced glycation endproducts (AGE). Also functions as a nucleotide deglycase able to repair glycated guanine in the free nucleotide pool (GTP, GDP, GMP, dGTP) and in DNA and RNA. Is thus involved in a major nucleotide repair system named guanine glycation repair (GG repair), dedicated to reversing methylglyoxal and glyoxal damage via nucleotide sanitization and direct nucleic acid repair. Plays an important role in protecting cells from carbonyl stress. The polypeptide is Protein/nucleic acid deglycase HchA (Shigella sonnei (strain Ss046)).